The following is a 262-amino-acid chain: Small ribosomal subunit protein mS23 (262 aa).

A disordered region spans residues 211 to 262 (SGQSDEAPEGEGSDMSAGEYDMAVEELAGQGSIPNTPQSTVVPEGTSAPAHA). A compositionally biased stretch (polar residues) spans 242–251 (SIPNTPQSTV).

It belongs to the mitochondrion-specific ribosomal protein mS23 family. In terms of assembly, component of the mitochondrial small ribosomal subunit.

It is found in the mitochondrion. The polypeptide is Small ribosomal subunit protein mS23 (RSM25) (Phaeosphaeria nodorum (strain SN15 / ATCC MYA-4574 / FGSC 10173) (Glume blotch fungus)).